The chain runs to 456 residues: tRNA modification GTPase MnmE (456 aa).

Residues Arg-24, Glu-81, and Lys-120 each coordinate (6S)-5-formyl-5,6,7,8-tetrahydrofolate. The TrmE-type G domain maps to 216–379 (GMTVVIAGRP…LREHLKACMG (164 aa)). K(+) is bound at residue Asn-226. Residues 226–231 (NAGKSS), 245–251 (TEIAGTT), 270–273 (DTAG), 335–338 (NKAD), and 359–361 (SAR) each bind GTP. Residue Ser-230 coordinates Mg(2+). The K(+) site is built by Thr-245, Ile-247, and Thr-250. Residue Thr-251 participates in Mg(2+) binding. Lys-456 is a binding site for (6S)-5-formyl-5,6,7,8-tetrahydrofolate.

It belongs to the TRAFAC class TrmE-Era-EngA-EngB-Septin-like GTPase superfamily. TrmE GTPase family. As to quaternary structure, homodimer. Heterotetramer of two MnmE and two MnmG subunits. K(+) is required as a cofactor.

It is found in the cytoplasm. Functionally, exhibits a very high intrinsic GTPase hydrolysis rate. Involved in the addition of a carboxymethylaminomethyl (cmnm) group at the wobble position (U34) of certain tRNAs, forming tRNA-cmnm(5)s(2)U34. The protein is tRNA modification GTPase MnmE of Pseudomonas savastanoi pv. phaseolicola (strain 1448A / Race 6) (Pseudomonas syringae pv. phaseolicola (strain 1448A / Race 6)).